The primary structure comprises 393 residues: Sex hormone-binding globulin (393 aa).

The signal sequence occupies residues 1 to 27; it reads MEGRGPLATSPRRRWLLLLLLLPHSHQ. Laminin G-like domains are found at residues 35–208 and 215–381; these read VHLS…PRSC and GSFF…THSC. 2 disulfides stabilise this stretch: cysteine 183–cysteine 208 and cysteine 353–cysteine 381. Asparagine 371 and asparagine 387 each carry an N-linked (GlcNAc...) asparagine glycan.

Homodimer.

It localises to the secreted. Its function is as follows. Functions as an androgen transport protein, but may also be involved in receptor mediated processes. Each dimer binds one molecule of steroid. Specific for 5-alpha-dihydrotestosterone, testosterone, and 17-beta-estradiol. Regulates the plasma metabolic clearance rate of steroid hormones by controlling their plasma concentration. This chain is Sex hormone-binding globulin (SHBG), found in Crocuta crocuta (Spotted hyena).